A 163-amino-acid chain; its full sequence is Phosphopantetheine adenylyltransferase (163 aa).

Residue Thr-10 participates in substrate binding. ATP is bound by residues 10–11 (TF) and His-18. 3 residues coordinate substrate: Lys-42, Leu-74, and Arg-88. ATP contacts are provided by residues 89 to 91 (GLR), Glu-99, and 124 to 130 (NSFISST).

The protein belongs to the bacterial CoaD family. Homohexamer. Mg(2+) serves as cofactor.

The protein resides in the cytoplasm. It catalyses the reaction (R)-4'-phosphopantetheine + ATP + H(+) = 3'-dephospho-CoA + diphosphate. Its pathway is cofactor biosynthesis; coenzyme A biosynthesis; CoA from (R)-pantothenate: step 4/5. Reversibly transfers an adenylyl group from ATP to 4'-phosphopantetheine, yielding dephospho-CoA (dPCoA) and pyrophosphate. This is Phosphopantetheine adenylyltransferase from Shewanella oneidensis (strain ATCC 700550 / JCM 31522 / CIP 106686 / LMG 19005 / NCIMB 14063 / MR-1).